A 1961-amino-acid chain; its full sequence is Ankyrin-3 (1961 aa).

The segment covering 1–10 has biased composition (basic and acidic residues); sequence MSEEPKEKPA. The segment at 1 to 25 is disordered; sequence MSEEPKEKPAKPAHRKRKGKKSDAN. Residues 11-20 are compositionally biased toward basic residues; that stretch reads KPAHRKRKGK. S22 carries the phosphoserine modification. ANK repeat units follow at residues 56–85, 89–118, 122–151, 155–184, 186–213, 217–246, 250–279, 283–312, 316–345, 349–378, 382–411, 415–444, 448–477, 481–510, 514–543, 547–576, 580–609, 613–642, 646–675, 679–708, 712–741, 745–774, and 778–807; these read NGLN…NVDA, KGNT…NVNA, NGFT…SQSL, DGFT…KGKV, LPAL…NADV, SGFT…AVDF, NDIT…KIDA, DGLT…PILS, NGLS…PVDD, DYLT…SPNA, NGFT…SIQA, SGLT…SPNT, RGET…QVEA, DDQT…SPNA, SGYT…SLSI, KGFT…SPDA, SGLT…SPHA, NGYT…DANA, QGIA…NVNL, SGLT…HVDA, MGYT…KVNA, NGYT…SPNE, and NGNT…EIMT. Phosphoserine is present on S606. Residue L732 is modified to Phosphoserine. 10 positions are modified to phosphoserine: S830, S844, S850, S873, S914, S917, S923, S958, S960, and S1114. 2 consecutive ZU5 domains span residues 985 to 1140 and 1142 to 1289; these read FLVS…VVSR and KQES…LADC. The segment at 1274-1408 is UPA domain; the sequence is VSFTTNVSAR…SIKIRDTSQE (135 aa). S1451, S1462, S1470, S1473, and G1560 each carry phosphoserine. Positions 1478–1562 constitute a Death domain; that stretch reads TDIRMAIVAD…DIVTLLEGPI (85 aa). Disordered regions lie at residues 1606-1678, 1698-1740, 1784-1818, 1844-1884, and 1915-1961; these read PNPF…DPLD, SVPG…VTED, WQNE…DQAR, PEAK…PVSP, and MTRT…KKTH. The span at 1725-1740 shows a compositional bias: basic and acidic residues; sequence QQEKGKSGPDEEVTED. A compositionally biased stretch (polar residues) spans 1784-1795; the sequence is WQNETPSGSLES. S1795, S1813, and S1883 each carry phosphoserine. The segment covering 1808 to 1818 has biased composition (basic and acidic residues); it reads DRLDDSSDQAR. A compositionally biased stretch (basic and acidic residues) spans 1933–1961; that stretch reads GSTRSEPKQGEGYKVKTKKEIRNVEKKTH.

In terms of assembly, may be a constituent of a NFASC/NRCAM/ankyrin G complex. Interacts with RHBG. Directly interacts with DMD and betaDAG1; this interaction does not interfere with DMD-binding and is required for DMD and betaDAG1 retention at costameres. Interacts (via N-terminal ANK repeats) with SCHIP1 isoform 7 (via C-terminus); this interaction is required for the localization at axon initial segments (AISs) and nodes of Ranvier (NRs). Interacts with PLEC and FLNC. Interacts with KCNA1; this inhibits channel activity. Interacts with SCN5A. Interacts with PKP2 and GJA1/CX43. As to expression, expressed in many epithelial tissues, muscles and axons. Expressed in kidney, brain, skin, lung, liver, intestine, pancreas, heart and testis (at protein level). In testis, expressed in Leydig cells, but very weakly or not at all in Sertoli cells or seminiferous tubules. Expressed in macrophages (at protein level).

It localises to the cytoplasm. The protein localises to the cytoskeleton. Its subcellular location is the cell projection. It is found in the axon. The protein resides in the cell membrane. It localises to the sarcolemma. The protein localises to the postsynaptic cell membrane. Its subcellular location is the lysosome. It is found in the T-tubule. In terms of biological role, membrane-cytoskeleton linker. May participate in the maintenance/targeting of ion channels and cell adhesion molecules at the nodes of Ranvier and axonal initial segments. In skeletal muscle, required for costamere localization of DMD and betaDAG1. Regulates KCNA1 channel activity in function of dietary Mg(2+) levels, and thereby contributes to the regulation of renal Mg(2+) reabsorption. Required for intracellular adhesion and junctional conductance in myocytes, potentially via stabilization of GJA1/CX43 protein abundance and promotion of PKP2, GJA1/CX43, and SCN5A/Nav1.5 localization to cell-cell junctions. This chain is Ankyrin-3 (Ank3), found in Mus musculus (Mouse).